Here is a 375-residue protein sequence, read N- to C-terminus: Alcohol dehydrogenase 1 (375 aa).

Ala1 carries the N-acetylalanine modification. 7 residues coordinate Zn(2+): Cys46, His68, Cys98, Cys101, Cys104, Cys112, and Cys175. NAD(+)-binding positions include 200–205 (GLGGVG), Asp224, Lys229, 293–295 (VGL), and Arg370.

Belongs to the zinc-containing alcohol dehydrogenase family. Class-I subfamily. Zn(2+) serves as cofactor.

Its subcellular location is the cytoplasm. The catalysed reaction is a primary alcohol + NAD(+) = an aldehyde + NADH + H(+). The enzyme catalyses a secondary alcohol + NAD(+) = a ketone + NADH + H(+). In Pelophylax perezi (Perez's frog), this protein is Alcohol dehydrogenase 1.